Consider the following 20-residue polypeptide: Zinc metalloproteinase-disintegrin-like uracoina-1 (20 aa).

This sequence belongs to the venom metalloproteinase (M12B) family. P-III subfamily. Monomer. Requires Zn(2+) as cofactor. Expressed by the venom gland.

The protein localises to the secreted. Its activity is regulated as follows. Inhibited by ethylenediaminetetraacetic acid (EDTA) and 1,10-phenanthroline. Not inhibited by tosyl-L-lysine chloromethyl ketone (TCLK) and phenylmethanesulfonylfluoride (PMSF). Functionally, snake venom zinc metalloprotease that possesses hemorrhagic activity (minimum hemorrhagic dose, MHD=4.7 ug) when injected intradermally into mice. Degrades the alpha-chain of fibrinogen (FGA). The protein is Zinc metalloproteinase-disintegrin-like uracoina-1 of Crotalus vegrandis (Uracoan rattlesnake).